The following is an 832-amino-acid chain: AP-1 complex subunit gamma-1 (832 aa).

Positions 733–832 constitute a GAE domain; the sequence is LNVYASLLSA…QFDHKFDETL (100 aa).

Adapter protein complex 1 (AP-1) is a heterotetramer composed of two large adaptins (gamma-type subunit APL4 and beta-type subunit APL2), a medium adaptin (mu-type subunit APM1) and a small adaptin (sigma-type subunit APS1). AP-1 interacts with clathrin. Also a component of the AP-1R complex composed of at least APM2, APL4 and APS1.

The protein localises to the cytoplasm. The protein resides in the golgi apparatus membrane. Its subcellular location is the cytoplasmic vesicle. It is found in the clathrin-coated vesicle membrane. In terms of biological role, adaptins are components of the adapter complexes which link clathrin to receptors in coated vesicles. Clathrin-associated protein complexes are believed to interact with the cytoplasmic tails of membrane proteins, leading to their selection and concentration. The AP-1 complex interacts directly with clathrin. Component of the AP-1-related (AP-1R) complex, an adapter protein complex that mediates sorting of cargo SNARE SNC1. In contrast to the APM1-containing AP-1 complex, AP-1R is incapable of sorting CHS3. The chain is AP-1 complex subunit gamma-1 (APL4) from Saccharomyces cerevisiae (strain ATCC 204508 / S288c) (Baker's yeast).